The chain runs to 781 residues: AP-3 complex subunit beta (781 aa).

5 HEAT repeats span residues 113–151, 153–186, 187–224, 294–332, and 521–559; these read PNLA…ASLY, IILH…EQGI, SIKD…QELQ, DHDL…PKTF, and PRIC…HDVD. Disordered regions lie at residues 694–713 and 731–781; these read KPKR…TSSH and ARQS…ETTE. A compositionally biased stretch (polar residues) spans 699 to 712; the sequence is ASVSSVPSNTFTSS. Acidic residues predominate over residues 746–758; that stretch reads STSEETDHTDDES. Low complexity predominate over residues 759–774; the sequence is GSSSGDESTESSYVSS.

It belongs to the adaptor complexes large subunit family. In terms of assembly, adaptor protein complex 3 (AP-3) is a heterotetramer composed of 2 large adaptins (APL5 and APL6), a medium adaptin (APM3) and a small adaptin (APS3).

The protein resides in the golgi apparatus. The protein localises to the cytoplasmic vesicle. It is found in the clathrin-coated vesicle membrane. Functionally, part of the AP-3 complex, an adaptor-related complex which is not clathrin-associated. The complex is associated with the Golgi region as well as more peripheral structures. It facilitates the budding of vesicles from the Golgi membrane and may be directly involved in trafficking to the vacuole. This Eremothecium gossypii (strain ATCC 10895 / CBS 109.51 / FGSC 9923 / NRRL Y-1056) (Yeast) protein is AP-3 complex subunit beta (APL6).